Reading from the N-terminus, the 626-residue chain is Chaperone protein HtpG (626 aa).

The a; substrate-binding stretch occupies residues 1–341 (METKQFKAES…SEDLSLNISR (341 aa)). The b stretch occupies residues 342-552 (EMLQHDRQLK…EGEISIEMEK (211 aa)). A c region spans residues 553 to 626 (ILSAMPNNEN…FSNSICKLMI (74 aa)).

Belongs to the heat shock protein 90 family. Homodimer.

The protein resides in the cytoplasm. Molecular chaperone. Has ATPase activity. The polypeptide is Chaperone protein HtpG (Alkaliphilus oremlandii (strain OhILAs) (Clostridium oremlandii (strain OhILAs))).